Reading from the N-terminus, the 343-residue chain is Heat-inducible transcription repressor HrcA (343 aa).

This sequence belongs to the HrcA family.

Negative regulator of class I heat shock genes (grpE-dnaK-dnaJ and groELS operons). Prevents heat-shock induction of these operons. This is Heat-inducible transcription repressor HrcA from Thermobifida fusca (strain YX).